We begin with the raw amino-acid sequence, 177 residues long: MRIEAIATGKNPPEDVNVIIEVPIGGEPIKYEMDKEAGTLFVDRFLHTSMRYPGNYGFVPHTLSGDGDPIDVLVCNTRALVPGCVINVRPIGVLVMEDNAGQDEKVIAVPSPKLTLRYENVTEYTHLPEITRQQVQHFFEHYKDLEPGKWVKIEGWHDSKYAKKMIVDAIERAKKGK.

Residues lysine 30, arginine 44, and tyrosine 56 each coordinate substrate. Mg(2+)-binding residues include aspartate 66, aspartate 71, and aspartate 103. Residue tyrosine 142 coordinates substrate.

It belongs to the PPase family. As to quaternary structure, homohexamer. The cofactor is Mg(2+).

The protein localises to the cytoplasm. The catalysed reaction is diphosphate + H2O = 2 phosphate + H(+). Catalyzes the hydrolysis of inorganic pyrophosphate (PPi) forming two phosphate ions. In Mesorhizobium japonicum (strain LMG 29417 / CECT 9101 / MAFF 303099) (Mesorhizobium loti (strain MAFF 303099)), this protein is Inorganic pyrophosphatase.